Consider the following 206-residue polypeptide: ATP-dependent Clp protease proteolytic subunit (206 aa).

Ser-101 functions as the Nucleophile in the catalytic mechanism. The active site involves His-126.

It belongs to the peptidase S14 family. In terms of assembly, component of the chloroplastic Clp protease core complex.

The protein localises to the plastid. Its subcellular location is the chloroplast stroma. The catalysed reaction is Hydrolysis of proteins to small peptides in the presence of ATP and magnesium. alpha-casein is the usual test substrate. In the absence of ATP, only oligopeptides shorter than five residues are hydrolyzed (such as succinyl-Leu-Tyr-|-NHMec, and Leu-Tyr-Leu-|-Tyr-Trp, in which cleavage of the -Tyr-|-Leu- and -Tyr-|-Trp bonds also occurs).. Functionally, cleaves peptides in various proteins in a process that requires ATP hydrolysis. Has a chymotrypsin-like activity. Plays a major role in the degradation of misfolded proteins. This is ATP-dependent Clp protease proteolytic subunit from Solanum lycopersicum (Tomato).